A 221-amino-acid chain; its full sequence is Small ribosomal subunit protein eS8 (221 aa).

2 disordered regions span residues 1–41 and 128–169; these read MGIS…LSSN and TPAA…TLDP. Over residues 8–26 the composition is skewed to basic residues; that stretch reads MHKRRATGGKQKAWRKKRK. A compositionally biased stretch (basic and acidic residues) spans 146–169; sequence EETKKSNHVTRKLEKRKEGRTLDP.

This sequence belongs to the eukaryotic ribosomal protein eS8 family.

In Zea mays (Maize), this protein is Small ribosomal subunit protein eS8 (RPS8).